The primary structure comprises 134 residues: MDSRTGELITAAQAMNGVFIWEVPNPLYFKIIQHDNRPFVMNQDIITVQIRFNHNLRKALGLHQCWMDFKVWTTLQPQTWRFLRVFKTQVLKYLDSLGVISINTIVKAVEHVLYNVIHGTDRVEQSNLIKLNIY.

It belongs to the geminiviridae replication enhancer protein family. Homooligomer. Interacts with the replication-associated protein (REP). Interacts with host proliferating cell nuclear antigen (PCNA). Interacts with host retinoblastoma-related protein 1 (RBR1), and may thereby deregulate the host cell cycle. Oligomerization and interaction with PCNA are necessary for optimal replication enhancement.

Increases viral DNA accumulation. Enhances infectivity and symptom expression. This chain is Replication enhancer protein, found in Manihot esculenta (Cassava).